A 61-amino-acid polypeptide reads, in one-letter code: MDLRMLYFLIYFAVTHLPSLISLLLTNNYILTLLFIVLHILFIWLPWYTSCFSYSVGSKFT.

A run of 2 helical transmembrane segments spans residues 5–25 (MLYF…SLLL) and 29–49 (YILT…PWYT).

It is found in the membrane. This is an uncharacterized protein from Saccharomyces cerevisiae (strain ATCC 204508 / S288c) (Baker's yeast).